Here is a 205-residue protein sequence, read N- to C-terminus: Regulator of G-protein signaling 4 (205 aa).

3 S-palmitoyl cysteine lipidation sites follow: C2, C12, and C95. Positions 62-178 (SLENLISHEC…LKSRFYLDLV (117 aa)) constitute an RGS domain.

Palmitoylated on Cys-2 and/or Cys-12. Post-translationally, phosphorylated by cyclic GMP-dependent protein kinase. In terms of tissue distribution, expressed in brain and heart. Expressed in brain at protein level. Expressed in prefontal and visual cortex. Isoform 4 and isoform 5 are expressed ubiquitously. Isoform 1, isoform 2 and isoform 3 are not expressed in the cerebellum.

In terms of biological role, inhibits signal transduction by increasing the GTPase activity of G protein alpha subunits thereby driving them into their inactive GDP-bound form. Activity on G(z)-alpha is inhibited by phosphorylation of the G-protein. Activity on G(z)-alpha and G(i)-alpha-1 is inhibited by palmitoylation of the G-protein. This is Regulator of G-protein signaling 4 (RGS4) from Homo sapiens (Human).